The sequence spans 757 residues: 5-methyltetrahydropteroyltriglutamate--homocysteine methyltransferase (757 aa).

5-methyltetrahydropteroyltri-L-glutamate contacts are provided by residues 16-19 (RELK) and Lys-112. L-homocysteine-binding positions include 433–435 (IGS) and Glu-486. L-methionine contacts are provided by residues 433–435 (IGS) and Glu-486. 5-methyltetrahydropteroyltri-L-glutamate contacts are provided by residues 517–518 (RC) and Trp-563. Asp-601 lines the L-homocysteine pocket. Position 601 (Asp-601) interacts with L-methionine. Glu-607 is a binding site for 5-methyltetrahydropteroyltri-L-glutamate. His-643, Cys-645, and Glu-667 together coordinate Zn(2+). Residue His-696 is the Proton donor of the active site. Cys-728 is a Zn(2+) binding site.

The protein belongs to the vitamin-B12 independent methionine synthase family. Zn(2+) is required as a cofactor.

The enzyme catalyses 5-methyltetrahydropteroyltri-L-glutamate + L-homocysteine = tetrahydropteroyltri-L-glutamate + L-methionine. Its pathway is amino-acid biosynthesis; L-methionine biosynthesis via de novo pathway; L-methionine from L-homocysteine (MetE route): step 1/1. Its function is as follows. Catalyzes the transfer of a methyl group from 5-methyltetrahydrofolate to homocysteine resulting in methionine formation. The sequence is that of 5-methyltetrahydropteroyltriglutamate--homocysteine methyltransferase from Histophilus somni (strain 2336) (Haemophilus somnus).